The primary structure comprises 319 residues: Phospho-N-acetylmuramoyl-pentapeptide-transferase (319 aa).

10 consecutive transmembrane segments (helical) span residues 5–25 (LIPF…FIGF), 51–71 (TMGG…VLIW), 79–99 (TWIL…DDGI), 116–136 (LGQI…HFAF), 149–169 (SFLF…AVNL), 172–192 (GLDG…AWIA), 197–217 (NWVI…FFIF), 224–244 (IFMG…VSIF), 252–272 (LLIG…VISF), and 299–319 (VDIV…IIWG).

The protein belongs to the glycosyltransferase 4 family. MraY subfamily. Mg(2+) is required as a cofactor.

Its subcellular location is the cell membrane. It catalyses the reaction UDP-N-acetyl-alpha-D-muramoyl-L-alanyl-gamma-D-glutamyl-L-lysyl-D-alanyl-D-alanine + di-trans,octa-cis-undecaprenyl phosphate = Mur2Ac(oyl-L-Ala-gamma-D-Glu-L-Lys-D-Ala-D-Ala)-di-trans,octa-cis-undecaprenyl diphosphate + UMP. It functions in the pathway cell wall biogenesis; peptidoglycan biosynthesis. Functionally, catalyzes the initial step of the lipid cycle reactions in the biosynthesis of the cell wall peptidoglycan: transfers peptidoglycan precursor phospho-MurNAc-pentapeptide from UDP-MurNAc-pentapeptide onto the lipid carrier undecaprenyl phosphate, yielding undecaprenyl-pyrophosphoryl-MurNAc-pentapeptide, known as lipid I. The chain is Phospho-N-acetylmuramoyl-pentapeptide-transferase from Lactobacillus gasseri (strain ATCC 33323 / DSM 20243 / BCRC 14619 / CIP 102991 / JCM 1131 / KCTC 3163 / NCIMB 11718 / NCTC 13722 / AM63).